Reading from the N-terminus, the 325-residue chain is ATP-dependent (S)-NAD(P)H-hydrate dehydratase (325 aa).

Residues 9–315 (LLKKVYNMVP…EHVHTAFLNV (307 aa)) form the YjeF C-terminal domain. (6S)-NADPHX-binding positions include G119 and 172–178 (NVVEFGR). Residues 211–215 (KGAKD) and 230–239 (GGLKRSGGQG) contribute to the ATP site. Residue D240 coordinates (6S)-NADPHX.

It belongs to the NnrD/CARKD family. It depends on Mg(2+) as a cofactor.

It is found in the cytoplasm. It catalyses the reaction (6S)-NADHX + ATP = ADP + phosphate + NADH + H(+). The catalysed reaction is (6S)-NADPHX + ATP = ADP + phosphate + NADPH + H(+). Catalyzes the dehydration of the S-form of NAD(P)HX at the expense of ATP, which is converted to ADP. Together with NAD(P)HX epimerase, which catalyzes the epimerization of the S- and R-forms, the enzyme allows the repair of both epimers of NAD(P)HX, a damaged form of NAD(P)H that is a result of enzymatic or heat-dependent hydration. In Phaeosphaeria nodorum (strain SN15 / ATCC MYA-4574 / FGSC 10173) (Glume blotch fungus), this protein is ATP-dependent (S)-NAD(P)H-hydrate dehydratase.